The following is a 667-amino-acid chain: DNA ligase (667 aa).

Residues 32-36, 81-82, and Glu-110 each bind NAD(+); these read DSEYD and SL. Lys-112 acts as the N6-AMP-lysine intermediate in catalysis. Positions 133, 167, 283, and 307 each coordinate NAD(+). 4 residues coordinate Zn(2+): Cys-401, Cys-404, Cys-419, and Cys-424. The BRCT domain maps to 586–667; that stretch reads EGHPEFSGKT…FVDKQNELNS (82 aa).

This sequence belongs to the NAD-dependent DNA ligase family. LigA subfamily. The cofactor is Mg(2+). Mn(2+) serves as cofactor.

The enzyme catalyses NAD(+) + (deoxyribonucleotide)n-3'-hydroxyl + 5'-phospho-(deoxyribonucleotide)m = (deoxyribonucleotide)n+m + AMP + beta-nicotinamide D-nucleotide.. Its function is as follows. DNA ligase that catalyzes the formation of phosphodiester linkages between 5'-phosphoryl and 3'-hydroxyl groups in double-stranded DNA using NAD as a coenzyme and as the energy source for the reaction. It is essential for DNA replication and repair of damaged DNA. In Staphylococcus aureus (strain bovine RF122 / ET3-1), this protein is DNA ligase.